A 343-amino-acid polypeptide reads, in one-letter code: MNRLTLALDVMGGDFGPRVTIPALSLALAQQPMLSFVLFGDQYHAIPLLHSLPAEQQQRIRFVHTSRIVDPHVPVRQALRQSKGSSMRLAIEAVVAGEAQACVSGGNTGVLMGLAKWFVEPLVGIDRPALASLIPALNGQASVMLDLGANVEADSKLLLQFAEMGNIFAQSILSLAQPRLALLNIGTEEVKGRYAIQQAHHVLKNRADLHYIGFIESDKLMNHLADVIVCDGFCGNIALKAVEGVASHFLALFKQPKRSFFVDWLSSWWGRLLYHRVYRALQRVNPERHNGATLLGLSSVVVKSHGSAGVNAYFYAINHAIEQIQNRIPVKISAGLQKLHQNL.

This sequence belongs to the PlsX family. Homodimer. Probably interacts with PlsY.

The protein resides in the cytoplasm. It catalyses the reaction a fatty acyl-[ACP] + phosphate = an acyl phosphate + holo-[ACP]. Its pathway is lipid metabolism; phospholipid metabolism. Its function is as follows. Catalyzes the reversible formation of acyl-phosphate (acyl-PO(4)) from acyl-[acyl-carrier-protein] (acyl-ACP). This enzyme utilizes acyl-ACP as fatty acyl donor, but not acyl-CoA. In Haemophilus ducreyi (strain 35000HP / ATCC 700724), this protein is Phosphate acyltransferase.